A 550-amino-acid chain; its full sequence is Arginine--tRNA ligase (550 aa).

The short motif at 122–132 (GNPTGPLHLAH) is the 'HIGH' region element.

Belongs to the class-I aminoacyl-tRNA synthetase family. As to quaternary structure, monomer.

It is found in the cytoplasm. The enzyme catalyses tRNA(Arg) + L-arginine + ATP = L-arginyl-tRNA(Arg) + AMP + diphosphate. This is Arginine--tRNA ligase from Tropheryma whipplei (strain TW08/27) (Whipple's bacillus).